The chain runs to 81 residues: RNA-binding protein KhpA (81 aa).

The KH domain occupies 34–81 (KIALRLSVHKSDTGKVIGKQGRTAKAIRTAVFAAGVQSSKKVQFEIFD).

It belongs to the KhpA RNA-binding protein family. Forms a complex with KhpB.

The protein resides in the cytoplasm. Functionally, a probable RNA chaperone. Forms a complex with KhpB which binds to cellular RNA and controls its expression. Plays a role in peptidoglycan (PG) homeostasis and cell length regulation. The chain is RNA-binding protein KhpA from Bacillus subtilis (strain 168).